The chain runs to 453 residues: MSEKEIWEKVLEIAQEKLSAVSYSTFLKDTELYTIKDGEAIVLSSIPFNANWLNQQYAEIIQAILFDVVGYEVKPHFITTEELANYSNNETATPKEATKPSTETTEDNHVLGREQFNAHNTFDTFVIGPGNRFPHAASLAVAEAPAKAYNPLFIYGGVGLGKTHLMHAIGHHVLDNNPDAKVIYTSSEKFTNEFIKSIRDNEGEAFRERYRNIDVLLIDDIQFIQNKVQTQEEFFYTFNELHQNNKQIVISSDRPPKEIAQLEDRLRSRFEWGLIVDITPPDYETRMAILQKKIEEEKLDIPPEALNYIANQIQSNIRELEGALTRLLAYSQLLGKPITTELTAEALKDIIQAPKSKKITIQDIQKIVGQYYNVRIEDFSAKKRTKSIAYPRQIAMYLSRELTDFSLPKIGEEFGGRDHTTVIHAHEKISKDLKEDPIFKQEVENLEKEIRNV.

The segment at 1-71 (MSEKEIWEKV…QAILFDVVGY (71 aa)) is domain I, interacts with DnaA modulators. The segment at 71-114 (YEVKPHFITTEELANYSNNETATPKEATKPSTETTEDNHVLGRE) is domain II. The domain III, AAA+ region stretch occupies residues 115-331 (QFNAHNTFDT…GALTRLLAYS (217 aa)). ATP contacts are provided by Gly-159, Gly-161, Lys-162, and Thr-163. Residues 332–453 (QLLGKPITTE…ENLEKEIRNV (122 aa)) are domain IV, binds dsDNA.

Belongs to the DnaA family. In terms of assembly, oligomerizes as a right-handed, spiral filament on DNA at oriC.

The protein localises to the cytoplasm. Functionally, plays an essential role in the initiation and regulation of chromosomal replication. ATP-DnaA binds to the origin of replication (oriC) to initiate formation of the DNA replication initiation complex once per cell cycle. Binds the DnaA box (a 9 base pair repeat at the origin) and separates the double-stranded (ds)DNA. Forms a right-handed helical filament on oriC DNA; dsDNA binds to the exterior of the filament while single-stranded (ss)DNA is stabiized in the filament's interior. The ATP-DnaA-oriC complex binds and stabilizes one strand of the AT-rich DNA unwinding element (DUE), permitting loading of DNA polymerase. After initiation quickly degrades to an ADP-DnaA complex that is not apt for DNA replication. Binds acidic phospholipids. The sequence is that of Chromosomal replication initiator protein DnaA from Staphylococcus aureus (strain MRSA252).